The sequence spans 248 residues: tRNA (guanine-N(1)-)-methyltransferase (248 aa).

S-adenosyl-L-methionine is bound by residues glycine 113 and 133–138 (VGDYVL).

It belongs to the RNA methyltransferase TrmD family. Homodimer.

The protein localises to the cytoplasm. The catalysed reaction is guanosine(37) in tRNA + S-adenosyl-L-methionine = N(1)-methylguanosine(37) in tRNA + S-adenosyl-L-homocysteine + H(+). Specifically methylates guanosine-37 in various tRNAs. The polypeptide is tRNA (guanine-N(1)-)-methyltransferase (Shewanella sp. (strain ANA-3)).